A 308-amino-acid chain; its full sequence is Isochorismatase domain-containing protein 1 (308 aa).

The protein belongs to the isochorismatase family.

This Xenopus tropicalis (Western clawed frog) protein is Isochorismatase domain-containing protein 1 (isoc1).